A 2441-amino-acid polypeptide reads, in one-letter code: Histone lysine acetyltransferase CREBBP (2441 aa).

Disordered stretches follow at residues 1 to 29 (MAENLLDGPPNPKRAKLSSPGFSANDNTD) and 73 to 168 (LRGG…PATS). Ala2 carries the N-acetylalanine modification. The span at 20-29 (PGFSANDNTD) shows a compositional bias: polar residues. Positions 79–89 (SSINPGIGNVS) are enriched in low complexity. Ser120 bears the Phosphoserine mark. The segment covering 121 to 168 (PLNQGDSSTPNLPKQAASTSGPTPPASQALNPQAQKQVGLVTSSPATS) has biased composition (polar residues). Arg219 is subject to Omega-N-methylarginine. Positions 226–409 (PAPAMQGATS…GKACQVAHCA (184 aa)) are interaction with SRCAP. Residues 261-272 (GGMTKMGMTGTT) show a composition bias toward low complexity. Residues 261–292 (GGMTKMGMTGTTSPFGQPFSQTGGQQMGATGV) form a disordered region. Over residues 273–292 (SPFGQPFSQTGGQQMGATGV) the composition is skewed to polar residues. A TAZ-type 1 zinc finger spans residues 346-432 (DPEKRKLIQQ…RHDCPVCLPL (87 aa)). Zn(2+) contacts are provided by His362, Cys366, Cys379, Cys384, His393, Cys397, Cys403, Cys408, His417, Cys421, Cys426, and Cys429. Positions 586–665 (GVRKGWHEHV…KIYKIQKELE (80 aa)) constitute a KIX domain. 2 positions are modified to asymmetric dimethylarginine: Arg600 and Arg624. Position 656 is an N6-acetyllysine (Lys656). Polar residues predominate over residues 792-811 (FLPQNQFPSSSGAMSVNSVG). Residues 792 to 1088 (FLPQNQFPSS…SQPRKKIFKP (297 aa)) form a disordered region. Residues 846-862 (PCPPVTQSPLHPTPPPA) show a composition bias toward pro residues. Positions 894-906 (VSSGQTPTPTPGS) are enriched in polar residues. Low complexity-rich tracts occupy residues 909-930 (SAAQTQSTPTVQAAAQAQVTPQ) and 938-957 (PSVATPQSSQQQPTPVHTQP). Residues 974–989 (PTPSSVTSAETSSQQP) show a composition bias toward polar residues. Residue Lys999 forms a Glycyl lysine isopeptide (Lys-Gly) (interchain with G-Cter in SUMO1) linkage. A compositionally biased stretch (basic and acidic residues) spans 1012 to 1022 (TESKGEPRSEM). Lys1015 carries the post-translational modification N6-acetyllysine. Ser1031 bears the Phosphoserine mark. Over residues 1033–1060 (VKEETDTTEQKSEPMEVEEKKPEVKVEA) the composition is skewed to basic and acidic residues. Residues Lys1034 and Lys1057 each participate in a glycyl lysine isopeptide (Lys-Gly) (interchain with G-Cter in SUMO1) cross-link. The span at 1068-1080 (SNDTASQSTSPSQ) shows a compositional bias: polar residues. Position 1077 is a phosphoserine (Ser1077). One can recognise a Bromo domain in the interval 1086–1193 (FKPEELRQAL…EVFEQEIDPV (108 aa)). The tract at residues 1125 to 1171 (DYFDIVKNPMDLSTIKRKLDTGQYQEPWQYVDDVWLMFNNAWLYNRK) is interaction with histone. The segment at 1163-1181 (NNAWLYNRKTSRVYKFCSK) is interaction with ASF1A. At Lys1217 the chain carries N6-acetyllysine. Positions 1324-1701 (KFSAKRLQTT…MLVELHTQGQ (378 aa)) constitute a CBP/p300-type HAT domain. Residues Ser1383 and Ser1387 each carry the phosphoserine; by IKKA modification. Residues 1434–1436 (YLD) are interaction with histone. Residues 1435 to 1437 (LDS), 1447 to 1448 (RT), Ile1494, Arg1499, and Trp1503 each bind acetyl-CoA. Residues 1557 to 1569 (LEQEEEERKKEES) are compositionally biased toward basic and acidic residues. Residues 1557–1616 (LEQEEEERKKEESTAASETPEGSQGDSKNAKKKNNKKTNKNKSSISRANKKKPSMPNVSN) are disordered. Residues Lys1584, Lys1592, Lys1593, Lys1596, and Lys1598 each carry the N6-acetyllysine modification. A compositionally biased stretch (basic residues) spans 1586–1596 (AKKKNNKKTNK). The ZZ-type zinc finger occupies 1703 to 1751 (RFVYTCNECKHHVETRWHCTVCEDYDLCINCYNTKSHTHKMVKWGLGLD). Residues Cys1708, Cys1711, Cys1721, Cys1724, Cys1730, Cys1733, His1739, and His1741 each contribute to the Zn(2+) site. An N6-acetyllysine mark is found at Lys1742 and Lys1745. The residue at position 1764 (Ser1764) is a Phosphoserine. A TAZ-type 2 zinc finger spans residues 1766 to 1847 (QESRRLSIQR…KCPVPFCLNI (82 aa)). The disordered stretch occupies residues 1875 to 1959 (TRNVPQQSLP…AQPPPAAVEA (85 aa)). 2 stretches are compositionally biased toward pro residues: residues 1901-1913 (PQTPQPPAQPQPS) and 1944-1955 (PAPPPPAQPPPA). Ser2064, Ser2077, and Ser2080 each carry phosphoserine. Residues 2112–2421 (NQPGMQPQPG…NTPNRSALSS (310 aa)) are disordered. A compositionally biased stretch (low complexity) spans 2113–2138 (QPGMQPQPGLQSQPGMQPQPGMHQQP). Over residues 2167 to 2188 (PQGQALNIMNPGHNPNMTNMNP) the composition is skewed to polar residues. Low complexity-rich tracts occupy residues 2197–2216 (QLLQHQQQQQQQQQQQQQQQ), 2260–2279 (MGQMAAPMGQLGQMGQPGLG), and 2286–2304 (IQQALQQRILQQQQMKQQI). Polar residues-rich tracts occupy residues 2314–2326 (SPQQHMLSGQPQA) and 2333–2342 (QIATSLSNQV). Residues 2348–2371 (VQSPRPQSQPPHSSPSPRIQPQPS) show a composition bias toward pro residues. Residue Ser2350 is modified to Phosphoserine. A compositionally biased stretch (polar residues) spans 2410–2421 (QLNTPNRSALSS).

Part of a complex composed of MSX3, CREBBP/CBP AND EP300/p300; the interaction with MSX3 decreases histone acetylation activity. Interacts with DHX9 (via N-terminus); this interaction mediates association with RNA polymerase II holoenzyme and stimulates CREB-dependent transcriptional activation. Interacts (via transactivation domain and C-terminus) with PCNA; the interaction occurs on chromatin in UV-irradiated damaged cells. Found in a complex containing NCOA2; NCOA3; IKKA; IKKB and IKBKG. Probably part of a complex with HIF1A and EP300. The TAZ-type 1 domain interacts with HIF1A. Interacts with SRCAP, ELF3, MLLT7/FOXO4, N4BP2, NCOA6, PCAF, PELP1, PML, SMAD1, SMAD2, SMAD3, SPIB and TRERF1. Interacts with KLF1; the interaction results in acetylation and enhancement of transcriptional activity of KLF1. Interacts with MAFG; the interaction acetylates MAFG in the basic region and stimulates NFE2 transcriptional activity through increasing its DNA-binding activity. Interacts with IRF2; the interaction acetylates IRF2 and regulates its activity on the H4 promoter. Interacts with IRF3 (when phosphorylated); forming the dsRNA-activated factor 1 (DRAF1), a complex which activates the transcription of the type I interferon genes. Interacts (via N-terminus) with SS18L1/CREST (via C-terminus). Interacts with FOXO1; the interaction acetylates FOXO1 and inhibits its transcriptional activity. Interacts with MECOM and MTDH. Interacts with ASF1A and ASF1B; this promotes histone acetylation. Interacts with acetylated TP53/p53 and with the acetylated histones H3 and H4. Interacts with CITED1 (via C-terminus). Interacts with GATA1; the interaction results in acetylation and enhancement of transcriptional activity of GATA1. Interacts with MAF, CARM1. NCOA3, ZCCHC12, DDX17, DDX5 and CITED4 (C-terminal region). Interacts with phosphorylated CREB1. Interacts with DAXX; the interaction is dependent on CBP sumoylation and results in suppression of the transcriptional activity via recruitment of HDAC2 to DAXX. Interacts with NPAS2, CLOCK and BMAL1. Interacts with SMAD4; negatively regulated by ZBTB7A. Forms a complex with KMT2A and CREB1. Interacts with DDX3X; this interaction may facilitate HNF4A acetylation. Interacts with MSX1; the interaction may inhibit MSX1 autoinactivation. Interacts with MSX3. Interacts with ACSS2. Methylation of the KIX domain by CARM1 blocks association with CREB. This results in the blockade of CREB signaling, and in activation of apoptotic response. Post-translationally, phosphorylated by CHUK/IKKA at Ser-1383 and Ser-1387; these phosphorylations promote cell growth by switching the binding preference of CREBBP from TP53 to NF-kappa-B. In terms of processing, sumoylation negatively regulates transcriptional activity via the recruitment of DAAX. Autoacetylation is required for binding to protein substrates, such as acetylated histones and acetylated TP53/p53. Autoacetylation is induced by glucose and fatty acids.

It localises to the cytoplasm. The protein localises to the nucleus. It carries out the reaction L-lysyl-[histone] + acetyl-CoA = N(6)-acetyl-L-lysyl-[histone] + CoA + H(+). The catalysed reaction is L-lysyl-[protein] + acetyl-CoA = N(6)-acetyl-L-lysyl-[protein] + CoA + H(+). The enzyme catalyses (S)-lactoyl-CoA + L-lysyl-[protein] = N(6)-[(S)-lactoyl]-L-lysyl-[protein] + CoA + H(+). In terms of biological role, acetylates histones, giving a specific tag for transcriptional activation. Mediates acetylation of histone H3 at 'Lys-18' and 'Lys-27' (H3K18ac and H3K27ac, respectively). Also acetylates non-histone proteins, like DDX21, FBL, IRF2, MAFG, NCOA3, POLR1E/PAF53 and FOXO1. Binds specifically to phosphorylated CREB and enhances its transcriptional activity toward cAMP-responsive genes. Acts as a coactivator of ALX1. Acts as a circadian transcriptional coactivator which enhances the activity of the circadian transcriptional activators: NPAS2-BMAL1 and CLOCK-BMAL1 heterodimers. Acetylates PCNA; acetylation promotes removal of chromatin-bound PCNA and its degradation during nucleotide excision repair (NER). Acetylates POLR1E/PAF53, leading to decreased association of RNA polymerase I with the rDNA promoter region and coding region. Acetylates DDX21, thereby inhibiting DDX21 helicase activity. Acetylates FBL, preventing methylation of 'Gln-105' of histone H2A (H2AQ104me). In addition to protein acetyltransferase, can use different acyl-CoA substrates, such as lactoyl-CoA, and is able to mediate protein lactylation. Catalyzes lactylation of MRE11 in response to DNA damage, thereby promoting DNA double-strand breaks (DSBs) via homologous recombination (HR). Functions as a transcriptional coactivator for SMAD4 in the TGF-beta signaling pathway. The sequence is that of Histone lysine acetyltransferase CREBBP (Crebbp) from Mus musculus (Mouse).